The chain runs to 553 residues: MNDIEISQNAEMLPIQTIAKQAGFDEKVVEPYGHYKAKIDIFSEKPNTQLGKLVLVTSINPTPAGEGKSTVTVGLGDALNDLTGSAMIALREPSQGPVMGMKGGATGGGYSQVIPMDDINLHFTGDMHALTAANNTLAALIDNHLQQGNELNIDPRTIVWRRCLDINDRALRNIVIGLGGRFSGVPREDKFDITVASELMAILCLAQDLKDLKERINRILIANNYDGQPIFVKDLHVGGAIATLLKDAIKPNLVQTLGHTPAIIHGGPFANIAHGCNSVLATKTALRHAKYTVTEAGFGADLGAEKFLDIKTPVLGKQPDAIVIVATVRALKYNGGAKLADLKIEDVEALQKGYINLQRHIKNMQRYNIPVTVSINHFISDTDQEVNTLVKLIEAEGISAIVTDAWAKGGAGSKDLANEVIALADTNQGPMTKLYDNNGRIEDKIKTIVQKIYGGSDVEYSPQALKKIKECVANGWDHLPICMAKSQYSFSDDPKQLGAPSDFVMHVNDINIRLGAGFLVVQTGKVLTMPGLPKHPAALDIDIDSKGEITGLF.

Position 62–69 (Thr-62–Ser-69) interacts with ATP.

Belongs to the formate--tetrahydrofolate ligase family.

The enzyme catalyses (6S)-5,6,7,8-tetrahydrofolate + formate + ATP = (6R)-10-formyltetrahydrofolate + ADP + phosphate. It participates in one-carbon metabolism; tetrahydrofolate interconversion. The chain is Formate--tetrahydrofolate ligase from Pediococcus pentosaceus (strain ATCC 25745 / CCUG 21536 / LMG 10740 / 183-1w).